We begin with the raw amino-acid sequence, 198 residues long: MASTASNTSKLEKPVSLIWGCELNEQNKTFVFKVSDEDKSEHQLALRTVCLGDKAKDEFHVVEIVPQVEGSDVQPVPIASLKPSILPMATMVGIELTPPVTFRLKAGSGPVYISGQHIALEEDYSWAEEEGEEEVEEEEEEEDPESPPKAVKRPAASKKGSQAKKKKMDKDEEESSEEDSPVKKGKGAGRGRKPAAKK.

The tract at residues 35 to 38 is acidic tract A1; the sequence is SDED. Acidic residues predominate over residues 125–145; the sequence is SWAEEEGEEEVEEEEEEEDPE. A disordered region spans residues 125–198; it reads SWAEEEGEEE…GRGRKPAAKK (74 aa). The interval 128-145 is acidic tract A2; it reads EEEGEEEVEEEEEEEDPE. Positions 150–167 are enriched in basic residues; that stretch reads AVKRPAASKKGSQAKKKK. The Bipartite nuclear localization signal signature appears at 152-167; the sequence is KRPAASKKGSQAKKKK. The acidic tract A3 stretch occupies residues 172-174; that stretch reads EEE. Over residues 183–198 the composition is skewed to basic residues; the sequence is KKGKGAGRGRKPAAKK.

It belongs to the nucleoplasmin family. Homopentamer. In terms of tissue distribution, expressed in oocytes.

It localises to the nucleus. In terms of biological role, acts as a chaperone for histones, such as histone H2A-H2B, and thus regulates the assembly of nucleosome cores. Involved in chromatin remodeling, especially during fertilization and early embryonic development. May be involved in sperm chromatin decondensation during fertilization. The protein is Nucleoplasmin of Rhinella marina (Cane toad).